Reading from the N-terminus, the 243-residue chain is Phosphate-specific transport system accessory protein PhoU (243 aa).

It belongs to the PhoU family. Homodimer.

It is found in the cytoplasm. In terms of biological role, part of the phosphate (Pho) regulon, which plays a key role in phosphate homeostasis. Encoded together with proteins of the phosphate-specific transport (Pst) system in the polycistronic pstSCAB-phoU operon. PhoU is essential for the repression of the Pho regulon at high phosphate conditions. In this role, it may bind, possibly as a chaperone, to PhoR, PhoB or a PhoR-PhoB complex to promote dephosphorylation of phospho-PhoB, or inhibit formation of the PhoR-PhoB transitory complex. The sequence is that of Phosphate-specific transport system accessory protein PhoU from Serratia marcescens.